The following is a 503-amino-acid chain: Probable cytosol aminopeptidase (503 aa).

Mn(2+) is bound by residues K274 and D279. K286 is a catalytic residue. Residues D297, D356, and E358 each coordinate Mn(2+). R360 is an active-site residue.

This sequence belongs to the peptidase M17 family. It depends on Mn(2+) as a cofactor.

The protein resides in the cytoplasm. The enzyme catalyses Release of an N-terminal amino acid, Xaa-|-Yaa-, in which Xaa is preferably Leu, but may be other amino acids including Pro although not Arg or Lys, and Yaa may be Pro. Amino acid amides and methyl esters are also readily hydrolyzed, but rates on arylamides are exceedingly low.. It carries out the reaction Release of an N-terminal amino acid, preferentially leucine, but not glutamic or aspartic acids.. Functionally, presumably involved in the processing and regular turnover of intracellular proteins. Catalyzes the removal of unsubstituted N-terminal amino acids from various peptides. In Burkholderia ambifaria (strain MC40-6), this protein is Probable cytosol aminopeptidase.